We begin with the raw amino-acid sequence, 291 residues long: Lectin (291 aa).

An N-terminal signal peptide occupies residues 1-28 (MGISKKSQLVPLLAFITMFLMVVSRVSS). Residue D118 participates in Ca(2+) binding. R138 is an a carbohydrate binding site. Residues 147–162 (NIIKNSTNLDFNAAYN) constitute a propeptide, removed in mature form. Mn(2+)-binding residues include E170 and D172. Positions 172, 174, 176, and 181 each coordinate Ca(2+). Y174 lines the a carbohydrate pocket. Mn(2+) contacts are provided by D181 and H186. K208 lines the Ca(2+) pocket. Residue S228 coordinates a carbohydrate. Residues 281–291 (QLQDLRIASVV) constitute a propeptide, removed in mature form.

The protein belongs to the leguminous lectin family. Post-translationally, the mature chain consists of residues 163-280 followed by residues 29-147. Concanavalin A-like lectins of the Diocleinae subtribe undergo proteolytic processing referred to as circular permutation. The propeptide is split into an N-terminal and a C-terminal part, the gamma and beta chain, respectively. These are then religated in beta-gamma order to form the mature alpha chain. The beta and gamma chains can often be detected in cell extracts.

Functionally, D-mannose-binding lectin that also binds alpha-methyl-D-mannoside with even higher affinity. Has hemagglutinating activity against rabbit erythrocytes. Shows toxicity against the brine shrimp A.nauplii. Induces reversible paw edema and hypernociceptivity in rats. The polypeptide is Lectin (Dioclea lasiophylla).